We begin with the raw amino-acid sequence, 1337 residues long: C-Jun-amino-terminal kinase-interacting protein 3 (1337 aa).

The 89-residue stretch at Val-12–Leu-100 folds into the RH1 domain. Positions Glu-50 to Leu-80 are kinesin-binding domain (KBD); essential for its function in axon elongation. Residues Leu-58 to Glu-177 adopt a coiled-coil conformation. Disordered regions lie at residues Lys-183–Val-211 and Ser-245–Ala-285. Positions Met-184–Pro-198 are enriched in polar residues. The segment at Asn-210–Lys-226 is JNK-binding domain (JBD); essential for its function in axon elongation. A compositionally biased stretch (low complexity) spans Ser-261 to Thr-270. 3 positions are modified to phosphothreonine; by MAPK: Thr-266, Thr-276, and Thr-287. Residues Gly-271–Pro-282 are compositionally biased toward polar residues. 2 positions are modified to phosphoserine; by ROCK1: Ser-315 and Ser-365. Ser-366 carries the phosphoserine modification. The segment at Leu-424–Leu-459 is leucine zipper-like domain (LZ); essential for its function in axon elongation. Residues Ala-437–Met-555 adopt a coiled-coil conformation. The segment at Leu-459 to Lys-515 is interaction with NTRK2. One can recognise an RH2 domain in the interval Arg-521–Pro-595. At Ser-603 the chain carries Phosphoserine. Residues Asp-633 to Val-655 form a disordered region. The span at Ala-639–Val-655 shows a compositional bias: basic and acidic residues. The residue at position 677 (Ser-677) is a Phosphoserine. Disordered stretches follow at residues Trp-719 to Ser-772 and Pro-859 to Ser-966. The segment covering Leu-739–Pro-765 has biased composition (basic and acidic residues). Composition is skewed to polar residues over residues Val-879–Ser-892 and Glu-941–Gln-952.

It belongs to the JIP scaffold family. As to quaternary structure, forms homo- or heterooligomeric complexes. The central region of MAPK8IP3 interacts with the C-terminal of MAPK8IP2 but not MAPK8IP1. Binds specific components of the JNK signaling pathway namely MAPK8/JNK1, MAPK9/JNK2 and MAPK10/JNK3 to the N-terminal region, MAP2K4/MKK4 and MAP2K7/MKK7 to the central region and MAP3K11 to the C-terminal region. Binds the TPR motif-containing C-terminal of kinesin light chain, KLC1. Pre-assembled MAPK8IP1 scaffolding complexes are then transported as a cargo of kinesin, to the required subcellular location. Interacts with ROCK1 and this interaction is enhanced by ultraviolet-B (UVB) radiation. Interacts with SH3RF2. Interacts with NTRK2/TRKB and NTRK3/TRKC. In terms of processing, phosphorylation by ROCK1 is crucial for the recruitment of JNK. Highly expressed throughout many regions of the brain and at lower levels in the heart, liver, lung, testes and kidney. All isoforms have been identified in the brain, isoform 1a is also expressed in the spleen and lung.

It localises to the cytoplasm. The protein localises to the golgi apparatus. The protein resides in the cytoplasmic vesicle. Its subcellular location is the cell projection. It is found in the growth cone. It localises to the axon. The protein localises to the dendrite. The protein resides in the perinuclear region. Functionally, the JNK-interacting protein (JIP) group of scaffold proteins selectively mediates JNK signaling by aggregating specific components of the MAPK cascade to form a functional JNK signaling module. May function as a regulator of vesicle transport, through interactions with the JNK-signaling components and motor proteins. Promotes neuronal axon elongation in a kinesin- and JNK-dependent manner. Activates cofilin at axon tips via local activation of JNK, thereby regulating filopodial dynamics and enhancing axon elongation. Its binding to kinesin heavy chains (KHC), promotes kinesin-1 motility along microtubules and is essential for axon elongation and regeneration. Regulates cortical neuronal migration by mediating NTRK2/TRKB anterograde axonal transport during brain development. Acts as an adapter that bridges the interaction between NTRK2/TRKB and KLC1 and drives NTRK2/TRKB axonal but not dendritic anterograde transport, which is essential for subsequent BDNF-triggered signaling and filopodia formation. This chain is C-Jun-amino-terminal kinase-interacting protein 3 (Mapk8ip3), found in Mus musculus (Mouse).